We begin with the raw amino-acid sequence, 224 residues long: Serum amyloid P-component (224 aa).

A signal peptide spans 1-19 (MERLLLWVSVLASLPEAFA). The 201-residue stretch at 24–224 (TGKVFVFPRE…YVVIKPRVWS (201 aa)) folds into the Pentraxin (PTX) domain. N-linked (GlcNAc...) asparagine glycosylation is present at N51. C55 and C114 form a disulfide bridge. 6 residues coordinate Ca(2+): D77, N78, E155, Q156, D157, and Q167.

It belongs to the pentraxin family. As to quaternary structure, homopentamer. Pentraxin (or pentaxin) have a discoid arrangement of 5 non-covalently bound subunits. Ca(2+) is required as a cofactor.

It is found in the secreted. The protein is Serum amyloid P-component (APCS) of Sus scrofa (Pig).